A 514-amino-acid polypeptide reads, in one-letter code: Maltose/maltodextrin transport system permease protein MalF (514 aa).

Topologically, residues 1 to 16 (MDVIKKKHWWQSDALK) are cytoplasmic. The helical transmembrane segment at 17 to 36 (WSVLGLLGLLVGYLVVLMYA) threads the bilayer. The Periplasmic portion of the chain corresponds to 37 to 39 (QGE). A helical transmembrane segment spans residues 40-58 (YLFAITTLILSSAGLYIFA). The Cytoplasmic segment spans residues 59 to 66 (NRKAYAWR). A helical transmembrane segment spans residues 67–92 (YVYPGMAGMGLFVLFPLVCTIAIAFT). Residues 93–275 (NYSSTNQLTF…RVFTDEGIQK (183 aa)) are Periplasmic-facing. A helical transmembrane segment spans residues 276 to 306 (PFLAIFVWTVVFSLITVFLTVAVGMVLACLV). In terms of domain architecture, ABC transmembrane type-1 spans 281–505 (FVWTVVFSLI…LLVGALAIVN (225 aa)). At 307–318 (QWEALRGKAVYR) the chain is on the cytoplasmic side. Residues 319 to 336 (VLLILPYAVPSFISILIF) form a helical membrane-spanning segment. The Periplasmic portion of the chain corresponds to 337-369 (KGLFNQSFGEINMMLSALFGVKPAWFSDPTTAR). Residues 370 to 392 (TMLIIVNTWLGYPYMMILCMGLL) traverse the membrane as a helical segment. The Cytoplasmic segment spans residues 393–425 (KAIPDDLYEASAMDGAGPFQNFFKITLPLLIKP). The chain crosses the membrane as a helical span at residues 426-452 (LTPLMIASFAFNFNNFVLIQLLTNGGP). The Periplasmic portion of the chain corresponds to 453–483 (DRLGTTTPAGYTDLLVNYTYRIAFEGGGGQD). The chain crosses the membrane as a helical span at residues 484–505 (FGLAAAIATLIFLLVGALAIVN). The Cytoplasmic segment spans residues 506–514 (LKATRMKFD).

Belongs to the binding-protein-dependent transport system permease family. MalFG subfamily. The complex is composed of two ATP-binding proteins (MalK), two transmembrane proteins (MalG and MalF) and a solute-binding protein (MalE). Protein stability and stable complex formation require YidC.

It localises to the cell inner membrane. Its function is as follows. Part of the ABC transporter complex MalEFGK involved in maltose/maltodextrin import. Probably responsible for the translocation of the substrate across the membrane. The sequence is that of Maltose/maltodextrin transport system permease protein MalF from Escherichia coli (strain K12).